A 631-amino-acid chain; its full sequence is Shootin-1 (631 aa).

At methionine 1 the chain carries N-acetylmethionine. 2 positions are modified to phosphoserine: serine 3 and serine 4. The stretch at 7–353 (EKQLQLITSL…RVNQSENSVP (347 aa)) forms a coiled coil. Serine 101 bears the Phosphoserine; by PAK1 mark. Residue serine 249 is modified to Phosphoserine. The disordered stretch occupies residues 343 to 511 (KRVNQSENSV…SESKSMPVLG (169 aa)). Residues 352 to 369 (VPPPPPPPPPLPPPPPNP) are compositionally biased toward pro residues. Position 375 is a phosphoserine (serine 375). The segment covering 403 to 418 (TDLKRQAVEEMMDRIK) has biased composition (basic and acidic residues). The segment covering 456–465 (LNKSTSSRSL) has biased composition (polar residues). Residue serine 473 is modified to Phosphoserine. The residue at position 487 (threonine 487) is a Phosphothreonine. Over residues 490–505 (ADSSSPTGILATSESK) the composition is skewed to polar residues. Serine 494 is modified (phosphoserine). Threonine 496 bears the Phosphothreonine mark. 4 positions are modified to phosphoserine: serine 506, serine 515, serine 532, and serine 534. Disordered regions lie at residues 524-566 (KTLE…IGCR) and 579-631 (VVVL…SSNC). Threonine 537 is subject to Phosphothreonine. Over residues 550–561 (CTSSKVTFQPPS) the composition is skewed to polar residues. Over residues 590-631 (PQTKDQVAEKDPTQHKEDEGEIQPENKEDSIENVRETDSSNC) the composition is skewed to basic and acidic residues.

This sequence belongs to the shootin family. In terms of assembly, interacts with L1CAM; this interaction occurs in axonal growth cones. Interacts with actin filament retrograde flow; this interaction is enhanced in a netrin-1- and PAK1-dependent manner and promotes F-actin-substrate coupling and concomitant formation of traction forces at axonal growth cones. Interacts with RUFY3. Interacts with PFN2. Interacts (via N-terminus) with KIF20B; this interaction is direct and promotes the association of SHTN1 to microtubules in primary neurons. Associates with microtubule. Phosphorylated on Ser-101 and Ser-249 by PAK1 through a CDC42- and RAC1-dependent signaling pathway, which enhances its association with F-actin retrograde flow in filopodia and lamellipodia of axonal growth cones. Phosphorylation on Ser-101 and Ser-249 is increased by netrin-1.

Its subcellular location is the perikaryon. It is found in the cell projection. It localises to the axon. The protein localises to the growth cone. The protein resides in the cytoplasm. Its subcellular location is the cytoskeleton. It is found in the filopodium. It localises to the lamellipodium. In terms of biological role, involved in the generation of internal asymmetric signals required for neuronal polarization and neurite outgrowth. Mediates netrin-1-induced F-actin-substrate coupling or 'clutch engagement' within the axon growth cone through activation of CDC42, RAC1 and PAK1-dependent signaling pathway, thereby converting the F-actin retrograde flow into traction forces, concomitantly with filopodium extension and axon outgrowth. Plays a role in cytoskeletal organization by regulating the subcellular localization of phosphoinositide 3-kinase (PI3K) activity at the axonal growth cone. Also plays a role in regenerative neurite outgrowth. In the developing cortex, cooperates with KIF20B to promote both the transition from the multipolar to the bipolar stage and the radial migration of cortical neurons from the ventricular zone toward the superficial layer of the neocortex. Involved in the accumulation of phosphatidylinositol 3,4,5-trisphosphate (PIP3) in the growth cone of primary hippocampal neurons. The sequence is that of Shootin-1 from Homo sapiens (Human).